Consider the following 256-residue polypeptide: Hydroxyacylglutathione hydrolase (256 aa).

Zn(2+)-binding residues include H55, H57, D59, H60, H113, D130, and H168.

It belongs to the metallo-beta-lactamase superfamily. Glyoxalase II family. In terms of assembly, monomer. Zn(2+) is required as a cofactor.

The catalysed reaction is an S-(2-hydroxyacyl)glutathione + H2O = a 2-hydroxy carboxylate + glutathione + H(+). It functions in the pathway secondary metabolite metabolism; methylglyoxal degradation; (R)-lactate from methylglyoxal: step 2/2. Thiolesterase that catalyzes the hydrolysis of S-D-lactoyl-glutathione to form glutathione and D-lactic acid. In Psychromonas ingrahamii (strain DSM 17664 / CCUG 51855 / 37), this protein is Hydroxyacylglutathione hydrolase.